Here is a 318-residue protein sequence, read N- to C-terminus: tRNA uridine(34) hydroxylase (318 aa).

Residues 125–219 (QDPNTVVIDA…YGTSKDTEGK (95 aa)) form the Rhodanese domain. Cysteine 179 functions as the Cysteine persulfide intermediate in the catalytic mechanism.

Belongs to the TrhO family.

The catalysed reaction is uridine(34) in tRNA + AH2 + O2 = 5-hydroxyuridine(34) in tRNA + A + H2O. Its function is as follows. Catalyzes oxygen-dependent 5-hydroxyuridine (ho5U) modification at position 34 in tRNAs. The polypeptide is tRNA uridine(34) hydroxylase (Acholeplasma laidlawii (strain PG-8A)).